The primary structure comprises 200 residues: Systemin (200 aa).

Residues 1 to 33 (MGTPSYDIKNKGDDMQEEPKVKLHHEKGGDEKE) form a disordered region. Propeptides lie at residues 1 to 178 (MGTP…REDL) and 197 to 200 (NNKL). A 1; truncated repeat occupies 3-8 (TPSYDI). The segment covering 8–33 (IKNKGDDMQEEPKVKLHHEKGGDEKE) has biased composition (basic and acidic residues). 4 repeat units span residues 37 to 45 (EKETPSQDI), 80 to 88 (EKETISQYI), 117 to 125 (EKETPSQDI), and 145 to 153 (DKETPSQDI). 2 disordered regions span residues 106-159 (EEEE…MEGE) and 178-200 (LAVQ…NNKL). Basic and acidic residues-rich tracts occupy residues 111 to 140 (EKEK…KVEH) and 146 to 158 (KETP…KMEG).

As to expression, all organs except the roots. Transported out of wounds to distal tissues.

It localises to the cytoplasm. Its function is as follows. Activates a lipid-based signal transduction pathway in which linolenic acid is converted to jasmonic acid, a potent activator of defense gene transcription, including proteinase inhibitor. The sequence is that of Systemin from Solanum lycopersicum (Tomato).